Here is a 590-residue protein sequence, read N- to C-terminus: Pescadillo homolog (590 aa).

The BRCT domain occupies 332–422 (VCKSLFKDLK…IILPTEKYLV (91 aa)). Positions 561–590 (AMKISQSRKRSGVEIIEQRKKRLNDTQPSS) are disordered.

It belongs to the pescadillo family. Interacts with BOP1 and WDR12. Interacts with NSN1. As to expression, expressed in shoot and root apical meristems, epidermal cells and vasculature of developing leaves, trichome progenitor cells, young flowers, developing pollen grains and ovules, and mature pollen grains.

The protein localises to the nucleus. It localises to the nucleolus. Its subcellular location is the nucleoplasm. Functionally, required for maturation of ribosomal RNAs and formation of the large ribosomal subunit. Plays an essential role in cell growth and survival through its regulation of ribosome biogenesis and mitotic progression. Required for normal root cell growth and differentiation. The chain is Pescadillo homolog from Arabidopsis thaliana (Mouse-ear cress).